The primary structure comprises 634 residues: MINIEDISKSSNQSEEKQLKSTSTSSKPKYSFVAKSLFKGSNNITPYYLSTSNTFQCVASESIQTWLLSDDGHIFTSSGNFVLDVSSGGYFVELVQLNSNSKTQIWTIDTTNNKIQPGNGKYLDIDSLNICVAPLNGNATQKWTTFRRAPIPTGNWGYFQSKQLDSNNNYWGLSVLNNSTSYNTSVVMNKVQAKSIGQIWQMTNDGHILSRLDGNLVLDIGPSIDGSKTNYHLNTNVYKANDLMQQWGINENNQIFNQYYPNLCIGFVGELGVDSTVNCVLAQPSSASDINFQWIANPTYSLNQIVSEVPEPFPAYTSGDLLASYQYLSDDATNGYTDDIRSLYTSINVNLEIFYVNVTNATCPSSIHSTEDFSYVQNQIKNELTYAINVRLVFDNYSGFYSKLFSQGSTNLTNLANLINVDMSSDQVVNGDYTDAITSVFYAIISEIPIGGSIIANISESAVQFGELYAESNDSGPSTYQVTLSKLYDHLNENYENEMANAQRIKNTILQDWGMMSKTFALCFLPTNNPSSLNINGLDFQKISTIASLAYQTAIIQMLLPTNYQIYFTPAGYYAPVSSDDYSYTDSTGTYIMAEIDNCNSHPPKALTGFKTRSFHIFLWLEFSYLCDLLQYGR.

Residues M1–S23 form a disordered region. 2 Ricin B-type lectin domains span residues K27–F146 and P117–N250.

Belongs to the cup family.

It localises to the cytoplasm. The protein resides in the membrane. May play an important role in stabilizing and/or regulating the cell membrane during Ca(2+) stress or certain stages of development. This chain is Calcium up-regulated protein D (cupD), found in Dictyostelium discoideum (Social amoeba).